We begin with the raw amino-acid sequence, 318 residues long: MSNETRDLYNYQYPSSFSLHEMMNLPTSNPSSYGNLPSQNGFNPSTYSFTDCLQSSPAAYESLLQKTFGLSPSSSEVFNSSIDQEPNRDVTNDVINGGACNETETRVSPSNSSSSEADHPGEDSGKSRRKRELVGEEDQISKKVGKTKKTEVKKQREPRVSFMTKSEVDHLEDGYRWRKYGQKAVKNSPYPRSYYRCTTQKCNVKKRVERSFQDPTVVITTYEGQHNHPIPTNLRGSSAAAAMFSADLMTPRSFAHDMFRTAAYTNGGSVAAALDYGYGQSGYGSVNSNPSSHQVYHQGGEYELLREIFPSIFFKQEP.

Polar residues-rich tracts occupy residues 74–84 and 106–115; these read SSEVFNSSIDQ and RVSPSNSSSS. Residues 74-158 form a disordered region; sequence SSEVFNSSID…KTEVKKQREP (85 aa). Basic and acidic residues-rich tracts occupy residues 116 to 126 and 148 to 158; these read EADHPGEDSGK and KKTEVKKQREP. Residues 166-231 constitute a DNA-binding region (WRKY); it reads SEVDHLEDGY…YEGQHNHPIP (66 aa).

It belongs to the WRKY group II-c family.

It is found in the nucleus. Functionally, transcription factor. Interacts specifically with the W box (5'-(T)TGAC[CT]-3'), a frequently occurring elicitor-responsive cis-acting element. The protein is WRKY transcription factor 28 (WRKY28) of Arabidopsis thaliana (Mouse-ear cress).